The sequence spans 692 residues: Elongation factor G (692 aa).

The 275-residue stretch at 8-282 (ENTRNIGIMA…AVIDYLPSPL (275 aa)) folds into the tr-type G domain. GTP contacts are provided by residues 17–24 (AHIDAGKT), 81–85 (DTPGH), and 135–138 (NKMD).

Belongs to the TRAFAC class translation factor GTPase superfamily. Classic translation factor GTPase family. EF-G/EF-2 subfamily.

It is found in the cytoplasm. In terms of biological role, catalyzes the GTP-dependent ribosomal translocation step during translation elongation. During this step, the ribosome changes from the pre-translocational (PRE) to the post-translocational (POST) state as the newly formed A-site-bound peptidyl-tRNA and P-site-bound deacylated tRNA move to the P and E sites, respectively. Catalyzes the coordinated movement of the two tRNA molecules, the mRNA and conformational changes in the ribosome. This Bacillus mycoides (strain KBAB4) (Bacillus weihenstephanensis) protein is Elongation factor G.